The chain runs to 391 residues: Chaperone protein DnaJ (391 aa).

The J domain occupies 2–67 (DYYDVLGVSK…QKRESYDRYG (66 aa)). Residues 148–226 (GVEKELLVSG…CRGQGRVKDK (79 aa)) form a CR-type zinc finger. Cys-161, Cys-164, Cys-178, Cys-181, Cys-200, Cys-203, Cys-214, and Cys-217 together coordinate Zn(2+). CXXCXGXG motif repeat units lie at residues 161-168 (CTTCSGSG), 178-185 (CERCKGSG), 200-207 (CPECGGEG), and 214-221 (CSNCRGQG).

This sequence belongs to the DnaJ family. As to quaternary structure, homodimer. Requires Zn(2+) as cofactor.

It is found in the cytoplasm. Its function is as follows. Participates actively in the response to hyperosmotic and heat shock by preventing the aggregation of stress-denatured proteins and by disaggregating proteins, also in an autonomous, DnaK-independent fashion. Unfolded proteins bind initially to DnaJ; upon interaction with the DnaJ-bound protein, DnaK hydrolyzes its bound ATP, resulting in the formation of a stable complex. GrpE releases ADP from DnaK; ATP binding to DnaK triggers the release of the substrate protein, thus completing the reaction cycle. Several rounds of ATP-dependent interactions between DnaJ, DnaK and GrpE are required for fully efficient folding. Also involved, together with DnaK and GrpE, in the DNA replication of plasmids through activation of initiation proteins. The polypeptide is Chaperone protein DnaJ (Chlamydia felis (strain Fe/C-56) (Chlamydophila felis)).